The primary structure comprises 757 residues: MDVNPTLLFLKIPAQNAISTTFPYTGDPPYSHGTGTGYTMDTVNRTHQYSEKGKWKTNTETGAPQLNPIDGPLPEDNEPSGYAQTDCVLEAVAFLEESHPGIFENSCLETMEVIQQTRVDKLTQGRQTYDWTLNRNQPAATALANTIEVFRSNGLTANESGRLIDLLRDVMDSMDKEEMEITTHFQRKRRVRDNMTKKMVTQRTIGKKKQRLNKRSYLIRALTLNTMTKDAERGKLKRRAIATPGMQIRGFVYFVETLARSICEKLEQSGLPVGGNEKKAKLANVVRKMMTNSQDTELSFTITGDNTKWNENQNPRMFLAMITYITRNQPEWFRNVLSIAPIMFSNKMARLGKGYMFESKSMKLRTQIPAEMLANIDLKYFNESTRKKIEKIRPLLIDGTASLSPGMMMGMFNMLSTVLGVSILNLGQKRYTKTTYWWDGLQSSDDFALIVNAPNHEGIQAGVDRFYRTCKLVGINMSKKKSYINRTGTFEFTSFFYRYGFVANFSMELPSFGVSGINESADMSIGVTVIKNNMINNDLGPATAQMALQLFIKDYRYTYRCHRGDTQIQTRRSFELKKLWEQTRSKAGLLVSDGGPNLYNIRNLHIPEVCLKWELMDEDYQGRLCNPLNPFVSHKEIESVNNAVVMPAHGPAKSMEYDAVATTHSWIPKRNRSILNTNQRGILEDEQMYQKCCNLFEKFFPSSSYRRPVGISSMVEAMVSRARIDARIDFESGRIKKEEFAEIMKICSTIEELRRQK.

The interval 50–71 (SEKGKWKTNTETGAPQLNPIDG) is disordered. Short sequence motifs (nuclear localization signal) lie at residues 187-195 (RKRRVRDNM) and 203-216 (RTIG…NKRS). Residues 249–256 (RGFVYFVE) form a promoter-binding site region. Residues 286 to 483 (VRKMMTNSQD…GINMSKKKSY (198 aa)) form the RdRp catalytic domain.

It belongs to the influenza viruses polymerase PB1 family. As to quaternary structure, influenza RNA polymerase is composed of three subunits: PB1, PB2 and PA. Interacts (via N-terminus) with PA (via C-terminus). Interacts (via C-terminus) with PB2 (via N-terminus); this interaction is essential for transcription initiation. In terms of processing, phosphorylated by host PRKCA.

Its subcellular location is the host nucleus. The protein localises to the host cytoplasm. The enzyme catalyses RNA(n) + a ribonucleoside 5'-triphosphate = RNA(n+1) + diphosphate. In terms of biological role, RNA-dependent RNA polymerase which is responsible for replication and transcription of virus RNA segments. The transcription of viral mRNAs occurs by a unique mechanism called cap-snatching. 5' methylated caps of cellular mRNAs are cleaved after 10-13 nucleotides by PA. In turn, these short capped RNAs are used as primers by PB1 for transcription of viral mRNAs. During virus replication, PB1 initiates RNA synthesis and copy vRNA into complementary RNA (cRNA) which in turn serves as a template for the production of more vRNAs. This is RNA-directed RNA polymerase catalytic subunit from Influenza A virus (strain A/Seal/Massachusetts/1/1980 H7N7).